We begin with the raw amino-acid sequence, 464 residues long: MEKKESLDSSLKEIVSVCKRRGFVYPGSEIYGGLSNTFDYGPYGVELLQNLKQLWWKYFVHLREDIVGLDSSILLNPKVWEASGHVSNFNDPLIDCKNCKTRIRADKFLEDQKGEGFATGLTLEKMNQVIKESNFACPNCGQRGTFTEARDFNLMFKTSHGASAEDSLDIYLRPETAQGIFLNFKNVVSTTRRKIPFGIAQIGKSFRNEIMARQFVFRTREFEQMEMEFFCEPGTQKEWFSHWVNYCMNWLTEQVGIKKENLRVREHEKEELSFYSEGTSDIEFKYNFGWGELWGIASRTDYDLNQHQKFSGEDLKYQDQVQNKKYVPFVVEPALGVNRLFLAVVTDAYEEEKLPDGETRTVLRFSPKIAPVKAAIFPLMKKDGLPEKSREIFADLSKLGNIEYDDGGAIGKRYRRQDEIGTPFCITVDYDTLKDDTVTVRERDSMSQERIAVNQLKNWLFERL.

Residues Arg104 and Glu175 each coordinate substrate. Residues 207-209 (RNE), 217-222 (FRTREF), 292-293 (EL), and 336-339 (GVNR) contribute to the ATP site. 222–226 (FEQME) is a binding site for substrate. Position 332 to 336 (332 to 336 (EPALG)) interacts with substrate.

The protein belongs to the class-II aminoacyl-tRNA synthetase family. In terms of assembly, homodimer.

Its subcellular location is the cytoplasm. It catalyses the reaction tRNA(Gly) + glycine + ATP = glycyl-tRNA(Gly) + AMP + diphosphate. Its function is as follows. Catalyzes the attachment of glycine to tRNA(Gly). In Leptospira interrogans serogroup Icterohaemorrhagiae serovar Lai (strain 56601), this protein is Glycine--tRNA ligase.